We begin with the raw amino-acid sequence, 153 residues long: Superoxide dismutase [Cu-Zn] (153 aa).

The Cu cation site is built by histidine 45, histidine 47, and histidine 62. Cysteines 56 and 145 form a disulfide. Zn(2+) is bound by residues histidine 62, histidine 70, histidine 79, and aspartate 82. Histidine 119 provides a ligand contact to Cu cation.

This sequence belongs to the Cu-Zn superoxide dismutase family. In terms of assembly, homodimer. Cu cation is required as a cofactor. Requires Zn(2+) as cofactor.

It localises to the cytoplasm. It carries out the reaction 2 superoxide + 2 H(+) = H2O2 + O2. In terms of biological role, destroys radicals which are normally produced within the cells and which are toxic to biological systems. The sequence is that of Superoxide dismutase [Cu-Zn] from Drosophila virilis (Fruit fly).